We begin with the raw amino-acid sequence, 88 residues long: Apolipoprotein C-I (88 aa).

An N-terminal signal peptide occupies residues 1–26 (MRLFLSLPVLVVVLAMVLEGPAPAQA).

The protein belongs to the apolipoprotein C1 family.

It is found in the secreted. Its function is as follows. Inhibitor of lipoprotein binding to the low density lipoprotein (LDL) receptor, LDL receptor-related protein, and very low density lipoprotein (VLDL) receptor. Associates with high density lipoproteins (HDL) and the triacylglycerol-rich lipoproteins in the plasma and makes up about 10% of the protein of the VLDL and 2% of that of HDL. Appears to interfere directly with fatty acid uptake and is also the major plasma inhibitor of cholesteryl ester transfer protein (CETP). Binds free fatty acids and reduces their intracellular esterification. Modulates the interaction of APOE with beta-migrating VLDL and inhibits binding of beta-VLDL to the LDL receptor-related protein. The chain is Apolipoprotein C-I (APOC1) from Ailurus fulgens (Himalayan red panda).